A 263-amino-acid polypeptide reads, in one-letter code: L-histidine 2-aminobutanoyltransferase (263 aa).

The protein belongs to the methyltransferase superfamily. CntL family.

The catalysed reaction is L-histidine + S-adenosyl-L-methionine = (2S)-2-amino-4-{[(1S)-1-carboxy-2-(1H-imidazol-4-yl)ethyl]amino}butanoate + S-methyl-5'-thioadenosine + H(+). In terms of biological role, catalyzes the nucleophilic attack of one alpha-aminobutanoate moiety from SAM onto L-histidine to produce the intermediate (2S)-2-amino-4-{[(1S)-1-carboxy-2-(1H-imidazol-4-yl)ethyl]amino}butanoate. Functions in the biosynthesis of the metallophore pseudopaline, which is involved in the acquisition of nickel and zinc, and thus enables bacterial growth inside the host, where metal access is limited. Therefore, this enzyme probably contributes to Pseudomonas virulence. Appears to be specific for L-histidine as substrate. This chain is L-histidine 2-aminobutanoyltransferase, found in Pseudomonas aeruginosa (strain ATCC 15692 / DSM 22644 / CIP 104116 / JCM 14847 / LMG 12228 / 1C / PRS 101 / PAO1).